Consider the following 138-residue polypeptide: Putative thioredoxin-like protein 453L (138 aa).

The region spanning 3–138 (QQKYFEKPVY…FNNIVNYVMG (136 aa)) is the Thioredoxin domain. Residues Cys44 and Cys47 each act as nucleophile in the active site. Cys44 and Cys47 are joined by a disulfide.

Belongs to the thioredoxin family.

Its function is as follows. Participates in various redox reactions through the reversible oxidation of its active center dithiol to a disulfide and catalyzes dithiol-disulfide exchange reactions. This is Putative thioredoxin-like protein 453L from Acheta domesticus (House cricket).